Here is a 131-residue protein sequence, read N- to C-terminus: Proline-rich protein 3 (131 aa).

The interval 1–77 (LHRGPPGSRG…KEQRNPRRLK (77 aa)) is disordered. A compositionally biased stretch (pro residues) spans 12-25 (MIPPLLSLPPPPRG). A compositionally biased stretch (gly residues) spans 28–44 (PLRGGLGPRSGPYGRGW). The C3H1-type zinc finger occupies 98–126 (KSDRPVCRHFAKKGHCRYEDLCAFYHPGA).

This is Proline-rich protein 3 (PRR3) from Sus scrofa (Pig).